The sequence spans 370 residues: MTKVLIVDDSALMRRHLKEILEVHGGFEVMVARNGIEALAGLESFDPDVITLDINMPEMDGLTCLSRIMATKPKPVVMVSSLTETGAEVTLEALALGAVDFIHKPDGTISLNVSRIEREILDKVTAAAKARIRRSLGLSSRLRTASDRGAAKRTRPADSSPLPTLSLTEIGVVLIGVSTGGPGTLEEVLPGLSAGFPWPVVVAQHMPGSFTPVFARRLNDLCPLTVIEASAQMPLEPGVIYIAKGDADVVIGHRATRFVVNPMPAGPHYLWHPSVTRLVESALRALPPERIIGVLLTGMGDDGAEAMAEVKRRGGRTIAQDEASSVIFGMPGELVKRGGANLVLPASRIAGQLNAWMSRTKETVYGTGQS.

The 117-residue stretch at 3–119 (KVLIVDDSAL…SLNVSRIERE (117 aa)) folds into the Response regulatory domain. Asp-53 bears the 4-aspartylphosphate mark. Positions 166–360 (SLTEIGVVLI…GQLNAWMSRT (195 aa)) constitute a CheB-type methylesterase domain. Catalysis depends on residues Ser-178, His-205, and Asp-302.

This sequence belongs to the CheB family. Post-translationally, phosphorylated by CheA. Phosphorylation of the N-terminal regulatory domain activates the methylesterase activity.

The protein localises to the cytoplasm. The enzyme catalyses [protein]-L-glutamate 5-O-methyl ester + H2O = L-glutamyl-[protein] + methanol + H(+). It catalyses the reaction L-glutaminyl-[protein] + H2O = L-glutamyl-[protein] + NH4(+). Involved in chemotaxis. Part of a chemotaxis signal transduction system that modulates chemotaxis in response to various stimuli. Catalyzes the demethylation of specific methylglutamate residues introduced into the chemoreceptors (methyl-accepting chemotaxis proteins or MCP) by CheR. Also mediates the irreversible deamidation of specific glutamine residues to glutamic acid. The protein is Protein-glutamate methylesterase/protein-glutamine glutaminase 3 of Rhodospirillum rubrum (strain ATCC 11170 / ATH 1.1.1 / DSM 467 / LMG 4362 / NCIMB 8255 / S1).